We begin with the raw amino-acid sequence, 273 residues long: MPNRTVFFVSDGTGITAETFGNSILAQFAIKPRHVRRPFIDNAEKADQVITEINGAALAEGKRPIVFITIVNDTVREKIGSHSNALVLDMFRTFVEPLEAELQLTSNHRVGRFSDVAKSQEYHDRIEAINFSLAHDDGQSSRNLAEADVILVGVSRSGKTPTSLYLAMQHGIKAANYPLIPEDFERDSIPSSLAPYKRKCFGLTIDADRLSQIRNERRPGSKYAALANCRYEINEAERMMKREGISWLSSTHKSIEEIATTILRDIRPDRLIY.

Residue 153-160 (GVSRSGKT) coordinates ADP.

It belongs to the pyruvate, phosphate/water dikinase regulatory protein family. PSRP subfamily.

It catalyses the reaction [pyruvate, water dikinase] + ADP = [pyruvate, water dikinase]-phosphate + AMP + H(+). The catalysed reaction is [pyruvate, water dikinase]-phosphate + phosphate + H(+) = [pyruvate, water dikinase] + diphosphate. Functionally, bifunctional serine/threonine kinase and phosphorylase involved in the regulation of the phosphoenolpyruvate synthase (PEPS) by catalyzing its phosphorylation/dephosphorylation. This chain is Putative phosphoenolpyruvate synthase regulatory protein, found in Leptothrix cholodnii (strain ATCC 51168 / LMG 8142 / SP-6) (Leptothrix discophora (strain SP-6)).